Reading from the N-terminus, the 352-residue chain is MSLIEIDGSYGEGGGQILRTAVGMSALTGEPVRIYNIRANRPRPGLSHQHLHAVKAVAEICDAECEGLEIGSTEIVFEPGKVKGGEYEVDIGTAGSVTLLLQAVKLAAIAADGPVEMEVRGGTDVKWSPPVDYEINVNAHYLDRLGYRYELEVLRRGHYPRGGGIVRARMEPPKRLKPLEAVKFGELESVRGISHCVRLPPHVAERQAKAASEIIERELGIRPEIEIETYPKGRDPHLGPGSGIVLWAEDDQGNRIGADALGEKGKPAEVVGREAAEQLVQRLRTGMALDEHMGDQILPFLAIADGESVFGVTGVDPHLPTNAWVVEKFLPVSVEIRGKEGEPATVEVRPEG.

ATP contacts are provided by residues Gln102 and 292–296 (HMGDQ). The active-site Tele-AMP-histidine intermediate is His318.

This sequence belongs to the RNA 3'-terminal cyclase family. Type 1 subfamily.

Its subcellular location is the cytoplasm. The catalysed reaction is a 3'-end 3'-phospho-ribonucleotide-RNA + ATP = a 3'-end 2',3'-cyclophospho-ribonucleotide-RNA + AMP + diphosphate. Its function is as follows. Catalyzes the conversion of 3'-phosphate to a 2',3'-cyclic phosphodiester at the end of RNA. The mechanism of action of the enzyme occurs in 3 steps: (A) adenylation of the enzyme by ATP; (B) transfer of adenylate to an RNA-N3'P to produce RNA-N3'PP5'A; (C) and attack of the adjacent 2'-hydroxyl on the 3'-phosphorus in the diester linkage to produce the cyclic end product. The biological role of this enzyme is unknown but it is likely to function in some aspects of cellular RNA processing. This chain is RNA 3'-terminal phosphate cyclase, found in Methanopyrus kandleri (strain AV19 / DSM 6324 / JCM 9639 / NBRC 100938).